Reading from the N-terminus, the 275-residue chain is Phenylalanine-4-hydroxylase (275 aa).

Fe cation-binding residues include H135, H140, and E181.

Belongs to the biopterin-dependent aromatic amino acid hydroxylase family. Fe(2+) is required as a cofactor.

It carries out the reaction (6R)-L-erythro-5,6,7,8-tetrahydrobiopterin + L-phenylalanine + O2 = (4aS,6R)-4a-hydroxy-L-erythro-5,6,7,8-tetrahydrobiopterin + L-tyrosine. It participates in amino-acid degradation; L-phenylalanine degradation; acetoacetate and fumarate from L-phenylalanine: step 1/6. The protein is Phenylalanine-4-hydroxylase (phhA) of Mesorhizobium japonicum (strain LMG 29417 / CECT 9101 / MAFF 303099) (Mesorhizobium loti (strain MAFF 303099)).